The chain runs to 206 residues: ATP-dependent Clp protease proteolytic subunit (206 aa).

Catalysis depends on Ser101, which acts as the Nucleophile. The active site involves His126.

The protein belongs to the peptidase S14 family. In terms of assembly, component of the chloroplastic Clp protease core complex.

Its subcellular location is the plastid. It is found in the chloroplast stroma. The catalysed reaction is Hydrolysis of proteins to small peptides in the presence of ATP and magnesium. alpha-casein is the usual test substrate. In the absence of ATP, only oligopeptides shorter than five residues are hydrolyzed (such as succinyl-Leu-Tyr-|-NHMec, and Leu-Tyr-Leu-|-Tyr-Trp, in which cleavage of the -Tyr-|-Leu- and -Tyr-|-Trp bonds also occurs).. Its function is as follows. Cleaves peptides in various proteins in a process that requires ATP hydrolysis. Has a chymotrypsin-like activity. Plays a major role in the degradation of misfolded proteins. This Solanum lycopersicum (Tomato) protein is ATP-dependent Clp protease proteolytic subunit.